The sequence spans 219 residues: Transmembrane emp24 domain-containing protein 10 (219 aa).

The first 31 residues, 1–31, serve as a signal peptide directing secretion; that stretch reads MSGSSGPQAQRGPCPFALLLLLLLGPSSVLA. The tract at residues 1–142 is required for interaction with STX17; it reads MSGSSGPQAQ…KNYEEIAKVE (142 aa). Residues 32–185 lie on the Lumenal side of the membrane; sequence ISFHLPVNSR…RDTNESTNTR (154 aa). Residues 41–193 form the GOLD domain; the sequence is RKCLREEIHK…TRVLYFSIFS (153 aa). Positions 147 to 178 are required for TMED10 and TMED2 cis-Golgi network localization; that stretch reads LEVELRRLEDLSESIVNDFAYMKKREEEMRDT. Dimethylated arginine occurs at positions 171 and 176. The N-linked (GlcNAc...) asparagine glycan is linked to N179. The helical transmembrane segment at 186–206 threads the bilayer; the sequence is VLYFSIFSMFCLIGLATWQVF. The interaction with COPG1 stretch occupies residues 204 to 219; that stretch reads QVFYLRRFFKAKKLIE. Residues 207–219 are Cytoplasmic-facing; the sequence is YLRRFFKAKKLIE. The segment at 207–219 is interaction with ARF1 and IL1B; that stretch reads YLRRFFKAKKLIE. Residues 211–212 carry the COPII vesicle coat-binding motif; that stretch reads FF. The short motif at 211–219 is the COPI vesicle coat-binding element; that stretch reads FFKAKKLIE.

Belongs to the EMP24/GP25L family. As to quaternary structure, predominantly dimeric and to a lesser extent monomeric in the ER. Monomer and dimer in ERGIC and cis-Golgi network. Forms homooligomer (via GOLD domain); the assembly is promoted by direct binding with leaderless cargos and may form a protein channel that facilitates cargo entry into the ERGIC. Forms heterooligomeric complexes with other members of the p24 family such as TMED2, TMED7 and TMED9. Interacts (via GOLD domain) with TMED2 (via GOLD domain); the complex is required for export of TMED10 from the ER to the cis-Golgi network; the complex is proposed to be involved in cis-Golgi network dynamics and / or biogenesis. Associates with the COPI vesicle coat subunits (coatomer). Tetramerization of the cytoplasmic domain at the Golgi membrane in vitro; the complex is proposed to interact with COPI coatomer and induce budding of the vesicles. Interacts with COPG1; the interaction involves TMED10 homodimer. Interacts with ARF1 (GDP-bound); the interaction probably involves a TMED10 oligomer. Interacts with SEC23A, SEC24B, SEC24C and SEC24D components of the coat protein complex II/COPII, indicative of an association of TMED10 with the COPII vesicle coat. Interacts with CD59. Interacts with MPPE1/PGAP5; the complex might recruit and sort GPI-anchored proteins to the ER-exit site, or the interaction might lead to recycling of PGAP5 between the ER and the Golgi. Interacts with F2LR1/PAR2. Interacts with KDELR2/ERD2; the interaction is disrupted by KDELR2 ligand. Found in a complex composed at least of SURF4, TMED2 and TMED10. Associates with the presenilin-dependent gamma-secretase complex. Interacts with STX17; the interaction is direct. Interacts with IL-1; the interaction is direct. Interacts with RAB21 (active GTP-bound form); the interaction is indirect and regulates TMED10 abundance and localization at the Golgi.

It localises to the endoplasmic reticulum membrane. Its subcellular location is the endoplasmic reticulum-Golgi intermediate compartment membrane. It is found in the golgi apparatus membrane. The protein resides in the golgi apparatus. The protein localises to the cis-Golgi network membrane. It localises to the trans-Golgi network membrane. Its subcellular location is the cytoplasmic vesicle. It is found in the secretory vesicle membrane. The protein resides in the cell membrane. The protein localises to the melanosome. In terms of biological role, cargo receptor involved in protein vesicular trafficking and quality control in the endoplasmic reticulum (ER) and Golgi. The p24 protein family is a group of transmembrane proteins that bind coat protein complex I/COPI and coat protein complex II/COPII involved in vesicular trafficking between the membranes. Acts at the lumenal side for incorporation of secretory cargo molecules into transport vesicles and involved in vesicle coat formation at the cytoplasmic side. Mainly functions in the early secretory pathway and cycles between the ER, ER-Golgi intermediate compartment (ERGIC) and Golgi, mediating cargo transport through COPI and COPII-coated vesicles. In COPII vesicle-mediated anterograde transport, involved in the transport of GPI-anchored proteins by acting together with TMED2 as their cargo receptor; the function specifically implies SEC24C and SEC24D of the COPII vesicle coat and lipid raft-like microdomains of the ER. Recognizes GPI anchors structural remodeled in the ER by the GPI inositol-deacylase/PGAP1 and the metallophosphoesterase MPPE1/PGAP5. In COPI vesicle-mediated retrograde transport, involved in the biogenesis of COPI vesicles and vesicle coat recruitment. Involved in trafficking of amyloid beta A4 protein and soluble APP-beta release (independent from the modulation of gamma-secretase activity). Involved in the KDELR2-mediated retrograde transport of the toxin A subunit (CTX-A-K63)together with COPI and the COOH terminus of KDELR2. On Golgi membranes, acts as a primary receptor for ARF1-GDP, a GTP-binding protein involved in COPI-vesicle formation. Increases coatomer-dependent GTPase-activating activity of ARFGAP2 which mediates the hydrolysis of ARF1-bound GTP and therefore modulates protein trafficking from the Golgi apparatus. Involved in the exocytic trafficking of G protein-coupled receptors F2LR1/PAR2 (trypsin and tryspin-like enzyme receptor), OPRM1 (opioid receptor) and P2RY4 (UTD and UDP receptor) from the Golgi to the plasma membrane, thus contributing to receptor resensitization. In addition to its cargo receptor activity, may also act as a protein channel after oligomerization, facilitating the post-translational entry of leaderless cytoplasmic cargo into the ERGIC. Involved in the translocation into ERGIC, the vesicle entry and the secretion of leaderless cargos (lacking the secretion signal sequence), including the mature form of interleukin 1/IL-1 family members, the alpha-crystallin B chain HSPB5, the carbohydrate-binding proteins galectin-1/LGALS1 and galectin-3/LGALS3, the microtubule-associated protein Tau/MAPT, and the annexin A1/ANXA1; the translocation process is dependent on cargo protein unfolding and enhanced by chaperones HSP90AB1 and HSP90B1/GRP9. Could also associates with the presenilin-dependent gamma-secretase complex in order to regulate gamma-cleavages of the amyloid beta A4 protein to yield amyloid-beta 40/Abeta40. This chain is Transmembrane emp24 domain-containing protein 10 (TMED10), found in Bos taurus (Bovine).